Consider the following 394-residue polypeptide: Probable fatty acid methyltransferase (394 aa).

Residues 128 to 129 (YS), 163 to 171 (LLDVGCGWG), and 189 to 194 (TLSKEQ) contribute to the S-adenosyl-L-methionine site. Cys-358 is a catalytic residue.

Belongs to the CFA/CMAS family.

The chain is Probable fatty acid methyltransferase from Pseudomonas putida (Arthrobacter siderocapsulatus).